Here is a 444-residue protein sequence, read N- to C-terminus: MTLDLSKPATAGYLSGFANEFATEALPGALPHGRNSPQRAPYGLYAEQLSGTAFTAPRGHNRRSWLYRIRPAAVHRPFEPYAGAQRLVSEFGDSADVPPTPPNQLRWDPLPMLVEPTDFVDGLVTMAGNGSAAAMNGCAIHLYAANRSMQDRFFYSADGELLIVPQQGRLFIATEFGRLDVEPFEIAVIPRGVRFAVALPDGDARGYICENFGALLRLPDLGPIGSNGLANPRDFLTPQAAYEDREGAFELIAKLNGRLWRADIGHSPLDVVAWHGNYAPYKYDLRLFNTIGSISFDHPDPSIFLVLQAQSDTPGVDTIDFVIFPPRWLAAEDTFRPPWFHRNVASEFMGLVHGAYDAKAEGFVPGGASLHNCMSGHGPDADTFEKASASDTTKPHKVDATMAFMFETRTLIRPTCYALDTAQLQADYFECWQGIKKHFNPEQK.

Residue H298 is the Proton acceptor of the active site. The Fe cation site is built by H341 and E347. Positions 356 and 377 each coordinate homogentisate. A Fe cation-binding site is contributed by H377.

The protein belongs to the homogentisate dioxygenase family. In terms of assembly, hexamer; dimer of trimers. Fe cation serves as cofactor.

It catalyses the reaction homogentisate + O2 = 4-maleylacetoacetate + H(+). The protein operates within amino-acid degradation; L-phenylalanine degradation; acetoacetate and fumarate from L-phenylalanine: step 4/6. Involved in the catabolism of homogentisate (2,5-dihydroxyphenylacetate or 2,5-OH-PhAc), a central intermediate in the degradation of phenylalanine and tyrosine. Catalyzes the oxidative ring cleavage of the aromatic ring of homogentisate to yield maleylacetoacetate. The sequence is that of Homogentisate 1,2-dioxygenase from Burkholderia orbicola (strain MC0-3).